Here is a 626-residue protein sequence, read N- to C-terminus: Putative Xaa-Pro dipeptidyl-peptidase (626 aa).

Catalysis depends on charge relay system residues Ser231, Asp348, and His379.

It belongs to the peptidase S15 family.

The enzyme catalyses Hydrolyzes Xaa-Pro-|- bonds to release unblocked, N-terminal dipeptides from substrates including Ala-Pro-|-p-nitroanilide and (sequentially) Tyr-Pro-|-Phe-Pro-|-Gly-Pro-|-Ile.. The sequence is that of Putative Xaa-Pro dipeptidyl-peptidase from Rhodopirellula baltica (strain DSM 10527 / NCIMB 13988 / SH1).